The chain runs to 533 residues: Phospho-2-dehydro-3-deoxyheptonate aldolase 1, chloroplastic (533 aa).

Residues 1 to 57 (MALSTNSTTSSLLPKTPLVQQPLLKNASLPTTTKAIRFIQPISAIHSSDSSKNTPIV) constitute a chloroplast transit peptide. Polar residues predominate over residues 47–56 (SSDSSKNTPI). The tract at residues 47-70 (SSDSSKNTPIVSAKPSSPPAATST) is disordered. The span at 57–70 (VSAKPSSPPAATST) shows a compositional bias: low complexity. Cys145 contributes to the Mn(2+) binding site. Substrate-binding positions include Arg184, 343-344 (ER), Lys366, and Arg397. Residues His429, Glu471, and Asp501 each contribute to the Mn(2+) site.

It belongs to the class-II DAHP synthase family. Homodimer. The cofactor is Mn(2+). As to expression, mostly expressed in flowers, especially in petal limbs and tubes, and, to a lower extent, in roots, stems, stigmas, anthers, leaves and sepals.

The protein resides in the plastid. It localises to the chloroplast. The enzyme catalyses D-erythrose 4-phosphate + phosphoenolpyruvate + H2O = 7-phospho-2-dehydro-3-deoxy-D-arabino-heptonate + phosphate. Its pathway is metabolic intermediate biosynthesis; chorismate biosynthesis; chorismate from D-erythrose 4-phosphate and phosphoenolpyruvate: step 1/7. Involved in the production of volatile organic compounds (VOCs), including floral volatile benzenoids and phenylpropanoids (FVBP), in flowers of fragrant cultivars (e.g. cv. Mitchell and cv. V26), scent attracting pollinators (e.g. the night-active hawkmoth pollinator Manduca sexta). Catalyzes an aldol-like condensation reaction between phosphoenolpyruvate (PEP) and D-erythrose 4-phosphate (E4P) to generate 3-deoxy-D-arabino-heptulosonate 7-phosphate (DAH7P) and inorganic phosphate. The polypeptide is Phospho-2-dehydro-3-deoxyheptonate aldolase 1, chloroplastic (Petunia hybrida (Petunia)).